Reading from the N-terminus, the 314-residue chain is Mitotic checkpoint protein BUB3.3 (314 aa).

WD repeat units lie at residues 11-50 (PIED…LSLE), 52-90 (NSQA…VDTI), 92-131 (RHDD…SLVF), 134-173 (DAGG…QSYA), 176-215 (VEVP…SEIK), 229-269 (LDGV…RLNE), and 272-311 (RYSN…QVFI).

The protein belongs to the WD repeat BUB3 family. As to quaternary structure, part of the mitotic checkpoint complex (MCC).

It is found in the nucleus. The protein resides in the chromosome. Its subcellular location is the centromere. It localises to the kinetochore. The protein localises to the cytoplasm. It is found in the cytoskeleton. The protein resides in the phragmoplast. Its subcellular location is the spindle. In terms of biological role, has a dual function in spindle-assembly checkpoint signaling and in promoting the establishment of correct kinetochore-microtubule (K-MT) attachments. Promotes the formation of stable end-on bipolar attachments. Necessary for kinetochore localization of BUB1. The BUB1/BUB3 complex plays a role in the inhibition of anaphase-promoting complex or cyclosome (APC/C) when spindle-assembly checkpoint is activated and inhibits the ubiquitin ligase activity of APC/C by phosphorylating its activator CDC20. The chain is Mitotic checkpoint protein BUB3.3 (BUB3.3) from Arabidopsis thaliana (Mouse-ear cress).